The sequence spans 131 residues: Small ribosomal subunit protein uS8 (131 aa).

This sequence belongs to the universal ribosomal protein uS8 family. In terms of assembly, part of the 30S ribosomal subunit. Contacts proteins S5 and S12.

Its function is as follows. One of the primary rRNA binding proteins, it binds directly to 16S rRNA central domain where it helps coordinate assembly of the platform of the 30S subunit. The protein is Small ribosomal subunit protein uS8 of Bordetella petrii (strain ATCC BAA-461 / DSM 12804 / CCUG 43448).